A 508-amino-acid chain; its full sequence is Pyruvate kinase, cytosolic isozyme (508 aa).

Arg-48 serves as a coordination point for substrate. Residues Asn-50, Ser-52, Asp-82, and Thr-83 each contribute to the K(+) site. Residue Asn-50–His-53 coordinates ATP. Positions 89 and 174 each coordinate ATP. A Mg(2+)-binding site is contributed by Glu-240. Gly-263, Asp-264, and Thr-296 together coordinate substrate. Mg(2+) is bound at residue Asp-264.

This sequence belongs to the pyruvate kinase family. In terms of assembly, homotetramer. Requires Mg(2+) as cofactor. K(+) serves as cofactor.

The protein resides in the cytoplasm. It carries out the reaction pyruvate + ATP = phosphoenolpyruvate + ADP + H(+). The protein operates within carbohydrate degradation; glycolysis; pyruvate from D-glyceraldehyde 3-phosphate: step 5/5. The chain is Pyruvate kinase, cytosolic isozyme from Nicotiana tabacum (Common tobacco).